A 285-amino-acid polypeptide reads, in one-letter code: MNTTKPSPATAAELLRASPLDALDARILLAHALGWSRTQLITRADEPLDAAARARYLALQARRAAGEPIAQLTGAREFFGLEFDITPDVLIPRPETELLVETALDAIDGIASPCVLDLGTGSGAIAVSIASERPDARVWALERSVAALDVARRNARKLLDPARAGGPLRFLESDWYAALDPGLRFHVVVSNPPYIARHDPHLAEGDLRFEPRGALTDENDGLAAIRTIVAGAHAFVAPGGALWLEHGYDQAAAVRTLLDAAGFADVESRADLASIERASGGRLPG.

S-adenosyl-L-methionine contacts are provided by residues 119 to 123 (GTGSG), Glu-142, Trp-175, and Asn-191. 191 to 194 (NPPY) provides a ligand contact to substrate.

This sequence belongs to the protein N5-glutamine methyltransferase family. PrmC subfamily.

The catalysed reaction is L-glutaminyl-[peptide chain release factor] + S-adenosyl-L-methionine = N(5)-methyl-L-glutaminyl-[peptide chain release factor] + S-adenosyl-L-homocysteine + H(+). Functionally, methylates the class 1 translation termination release factors RF1/PrfA and RF2/PrfB on the glutamine residue of the universally conserved GGQ motif. This Burkholderia pseudomallei (strain K96243) protein is Release factor glutamine methyltransferase.